We begin with the raw amino-acid sequence, 72 residues long: DNA-directed RNA polymerase subunit omega (72 aa).

Belongs to the RNA polymerase subunit omega family. The RNAP catalytic core consists of 2 alpha, 1 beta, 1 beta' and 1 omega subunit. When a sigma factor is associated with the core the holoenzyme is formed, which can initiate transcription.

The catalysed reaction is RNA(n) + a ribonucleoside 5'-triphosphate = RNA(n+1) + diphosphate. In terms of biological role, promotes RNA polymerase assembly. Latches the N- and C-terminal regions of the beta' subunit thereby facilitating its interaction with the beta and alpha subunits. The polypeptide is DNA-directed RNA polymerase subunit omega (Petrotoga mobilis (strain DSM 10674 / SJ95)).